Consider the following 215-residue polypeptide: Cytochrome b6 (215 aa).

Residues 32-52 (IFYCLGGITLTCFLVQVATGF) traverse the membrane as a helical segment. Cysteine 35 is a heme c binding site. Heme b-binding residues include histidine 86 and histidine 100. The next 3 membrane-spanning stretches (helical) occupy residues 90–110 (ASMM…TGGF), 116–136 (LTWV…VTGY), and 186–206 (LHTF…FLMI). Residues histidine 187 and histidine 202 each coordinate heme b.

The protein belongs to the cytochrome b family. PetB subfamily. In terms of assembly, the 4 large subunits of the cytochrome b6-f complex are cytochrome b6, subunit IV (17 kDa polypeptide, PetD), cytochrome f and the Rieske protein, while the 4 small subunits are PetG, PetL, PetM and PetN. The complex functions as a dimer. Heme b serves as cofactor. It depends on heme c as a cofactor.

The protein resides in the plastid. The protein localises to the chloroplast thylakoid membrane. Functionally, component of the cytochrome b6-f complex, which mediates electron transfer between photosystem II (PSII) and photosystem I (PSI), cyclic electron flow around PSI, and state transitions. This is Cytochrome b6 from Arabidopsis thaliana (Mouse-ear cress).